The sequence spans 640 residues: Chaperone protein HtpG (640 aa).

The interval 1–348 is a; substrate-binding; it reads MADVAHQETH…SNDLPLNVSR (348 aa). The b stretch occupies residues 349–565; that stretch reads EILQDNKITQ…GTGMSTQMIK (217 aa). Residues 566–640 form a c region; it reads LMQAAGQPVP…LNTLLMNLAK (75 aa).

This sequence belongs to the heat shock protein 90 family. In terms of assembly, homodimer.

It is found in the cytoplasm. In terms of biological role, molecular chaperone. Has ATPase activity. The protein is Chaperone protein HtpG of Pseudoalteromonas atlantica (strain T6c / ATCC BAA-1087).